Consider the following 325-residue polypeptide: Glutarate 2-hydroxylase (325 aa).

Residues H160, D162, and H292 each coordinate Fe cation.

This sequence belongs to the glutarate hydroxylase family. In terms of assembly, homotetramer. Fe(2+) is required as a cofactor.

The enzyme catalyses glutarate + 2-oxoglutarate + O2 = (S)-2-hydroxyglutarate + succinate + CO2. It participates in amino-acid degradation. Its function is as follows. Acts as an alpha-ketoglutarate-dependent dioxygenase catalyzing hydroxylation of glutarate (GA) to L-2-hydroxyglutarate (L2HG). Functions in a L-lysine degradation pathway that proceeds via cadaverine, glutarate and L-2-hydroxyglutarate. In Escherichia coli O157:H7, this protein is Glutarate 2-hydroxylase.